Here is a 375-residue protein sequence, read N- to C-terminus: Queuine tRNA-ribosyltransferase (375 aa).

Asp-93 acts as the Proton acceptor in catalysis. Substrate contacts are provided by residues 93 to 97 (DSGGF), Asp-147, Gln-191, and Gly-218. The RNA binding stretch occupies residues 249–255 (GVGTPLD). The Nucleophile role is filled by Asp-268. Positions 273 to 277 (TRNAR) are RNA binding; important for wobble base 34 recognition. The Zn(2+) site is built by Cys-306, Cys-308, Cys-311, and His-337.

The protein belongs to the queuine tRNA-ribosyltransferase family. In terms of assembly, homodimer. Within each dimer, one monomer is responsible for RNA recognition and catalysis, while the other monomer binds to the replacement base PreQ1. Zn(2+) serves as cofactor.

It carries out the reaction 7-aminomethyl-7-carbaguanine + guanosine(34) in tRNA = 7-aminomethyl-7-carbaguanosine(34) in tRNA + guanine. It participates in tRNA modification; tRNA-queuosine biosynthesis. Functionally, catalyzes the base-exchange of a guanine (G) residue with the queuine precursor 7-aminomethyl-7-deazaguanine (PreQ1) at position 34 (anticodon wobble position) in tRNAs with GU(N) anticodons (tRNA-Asp, -Asn, -His and -Tyr). Catalysis occurs through a double-displacement mechanism. The nucleophile active site attacks the C1' of nucleotide 34 to detach the guanine base from the RNA, forming a covalent enzyme-RNA intermediate. The proton acceptor active site deprotonates the incoming PreQ1, allowing a nucleophilic attack on the C1' of the ribose to form the product. After dissociation, two additional enzymatic reactions on the tRNA convert PreQ1 to queuine (Q), resulting in the hypermodified nucleoside queuosine (7-(((4,5-cis-dihydroxy-2-cyclopenten-1-yl)amino)methyl)-7-deazaguanosine). The sequence is that of Queuine tRNA-ribosyltransferase from Nitratidesulfovibrio vulgaris (strain DP4) (Desulfovibrio vulgaris).